We begin with the raw amino-acid sequence, 258 residues long: Bidirectional sugar transporter SWEET9 (258 aa).

At methionine 1–glutamate 7 the chain is on the extracellular side. The helical transmembrane segment at isoleucine 8 to valine 28 threads the bilayer. In terms of domain architecture, MtN3/slv 1 spans phenylalanine 10–glutamate 96. At proline 29–glycine 42 the chain is on the cytoplasmic side. The chain crosses the membrane as a helical span at residues phenylalanine 43–isoleucine 63. Topologically, residues methionine 64–tyrosine 69 are extracellular. A helical transmembrane segment spans residues leucine 70–isoleucine 90. Topologically, residues leucine 91–lysine 103 are cytoplasmic. The helical transmembrane segment at leucine 104 to valine 124 threads the bilayer. The Extracellular segment spans residues proline 125 to serine 131. A helical transmembrane segment spans residues threonine 132–methionine 152. Residues threonine 132–threonine 216 form the MtN3/slv 2 domain. The Cytoplasmic portion of the chain corresponds to arginine 153 to proline 165. The helical transmembrane segment at phenylalanine 166–isoleucine 186 threads the bilayer. Residues lysine 187–lysine 189 are Extracellular-facing. Residues phenylalanine 190 to methionine 210 form a helical membrane-spanning segment. Over methionine 211–lysine 258 the chain is Cytoplasmic.

The protein belongs to the SWEET sugar transporter family. Forms heterooligomers with SWEET1, SWEET5, SWEET8, SWEET11, SWEET13, SWEET16 and SWEET17. As to expression, specifically expressed in nectaries, mostly in the lower half of nectary parenchyma.

The protein resides in the cell membrane. Its subcellular location is the cytoplasmic vesicle membrane. The protein localises to the golgi apparatus. It localises to the trans-Golgi network membrane. Functionally, mediates both low-affinity uptake and efflux of sugar across the plasma membrane. Nectary-specific sugar transporter required for nectar production by mediating the secretion of sucrose from the nectary parenchyma to the extracellular space. The sequence is that of Bidirectional sugar transporter SWEET9 from Arabidopsis thaliana (Mouse-ear cress).